A 128-amino-acid chain; its full sequence is Small ribosomal subunit protein uS14m (128 aa).

The protein belongs to the universal ribosomal protein uS14 family. As to quaternary structure, component of the mitochondrial ribosome small subunit (28S) which comprises a 12S rRNA and about 30 distinct proteins. Interacts with LIAT1.

The protein resides in the mitochondrion. This Mus musculus (Mouse) protein is Small ribosomal subunit protein uS14m (Mrps14).